The sequence spans 946 residues: Protein translocase subunit SecA (946 aa).

Residues Gln-87, 105–109, and Asp-524 each bind ATP; that span reads GEGKT. Disordered regions lie at residues 872–892 and 904–946; these read PEQP…NTGE and PADT…GRYA. The span at 907 to 917 shows a compositional bias: basic and acidic residues; that stretch reads TVEKSERDPNR. The Zn(2+) site is built by Cys-930, Cys-932, Cys-941, and His-942. Residues 936–946 show a composition bias toward basic residues; the sequence is KKYKHCHGRYA.

The protein belongs to the SecA family. As to quaternary structure, monomer and homodimer. Part of the essential Sec protein translocation apparatus which comprises SecA, SecYEG and auxiliary proteins SecDF-YajC and YidC. Zn(2+) serves as cofactor.

The protein resides in the cell inner membrane. The protein localises to the cytoplasm. The catalysed reaction is ATP + H2O + cellular proteinSide 1 = ADP + phosphate + cellular proteinSide 2.. Functionally, part of the Sec protein translocase complex. Interacts with the SecYEG preprotein conducting channel. Has a central role in coupling the hydrolysis of ATP to the transfer of proteins into and across the cell membrane, serving both as a receptor for the preprotein-SecB complex and as an ATP-driven molecular motor driving the stepwise translocation of polypeptide chains across the membrane. The polypeptide is Protein translocase subunit SecA (Rhodopseudomonas palustris (strain BisB5)).